The primary structure comprises 343 residues: C5a anaphylatoxin chemotactic receptor 2 (343 aa).

Topologically, residues 1–44 are extracellular; that stretch reads MLNDTTSKDYEYEYDQEQYSDLLNVPVDCPAGNCFSNDAYLIVL. The N-linked (GlcNAc...) asparagine glycan is linked to Asn3. Residues 45 to 67 traverse the membrane as a helical segment; that stretch reads LGLYSVIFLVGVPGNTLLAWVTW. Over 68 to 78 the chain is Cytoplasmic; the sequence is KESRHRLGASW. The chain crosses the membrane as a helical span at residues 79 to 101; that stretch reads FLHLTMADLLCCVSLPFLAVPIA. Residues 102–120 lie on the Extracellular side of the membrane; it reads QKGHWPYGTAGCWLLSSIT. A disulfide bridge connects residues Cys113 and Cys192. Residues 121–143 traverse the membrane as a helical segment; sequence VLSMYASVLLLTGLSGDLFLLAF. The Cytoplasmic segment spans residues 144 to 155; sequence RPSWKNADQRTC. Residues 156–178 form a helical membrane-spanning segment; sequence GVRVVQVSSWMLALLLTVPGAVY. Topologically, residues 179 to 208 are extracellular; that stretch reads RKLLQEHYPPRLVCGTNYGGSVTAEVTITT. A helical membrane pass occupies residues 209–231; sequence VRFLFGFLVPLVFMASCHGILQR. Topologically, residues 232-243 are cytoplasmic; sequence QMARRHWPLGTA. A helical transmembrane segment spans residues 244 to 266; that stretch reads VVVGFFICWTPFHLLRVIIAVAS. Topologically, residues 267–280 are extracellular; that stretch reads SHSPLLAWALEAEP. Residues 281–300 traverse the membrane as a helical segment; it reads LVTGLALAHSALNPIMFLYF. Over 301–343 the chain is Cytoplasmic; sequence GRKQLCKSLQAACHWALRDLQDEEESAVTKVSTSQEMVSEMPV. A Phosphoserine modification is found at Ser326.

This sequence belongs to the G-protein coupled receptor 1 family. As to quaternary structure, interacts with C3 (the anaphylatoxin peptide C3a and the adipogenic hormone ASP); the interaction occurs with higher affinity for ASP, enhancing the phosphorylation and activation of GPR77, recruitment of ARRB2 to the cell surface and endocytosis of GRP77.

Its subcellular location is the cell membrane. Functionally, receptor for the chemotactic and inflammatory C3a, C4a and C5a anaphylatoxin peptides and also for their dearginated forms ASP/C3adesArg, C4adesArg and C5adesArg respectively. Couples weakly to G(i)-mediated signaling pathways. This Rattus norvegicus (Rat) protein is C5a anaphylatoxin chemotactic receptor 2 (C5ar2).